The following is a 245-amino-acid chain: Phycocyanobilin:ferredoxin oxidoreductase (245 aa).

Belongs to the HY2 family.

It catalyses the reaction (2R,3Z)-phycocyanobilin + 4 oxidized [2Fe-2S]-[ferredoxin] = biliverdin IXalpha + 4 reduced [2Fe-2S]-[ferredoxin] + 4 H(+). Its function is as follows. Catalyzes the four-electron reduction of biliverdin IX-alpha (2-electron reduction at both the A and D rings); the reaction proceeds via an isolatable 2-electron intermediate, 181,182-dihydrobiliverdin. This chain is Phycocyanobilin:ferredoxin oxidoreductase, found in Trichodesmium erythraeum (strain IMS101).